Consider the following 42-residue polypeptide: Protein Tat (42 aa).

The interaction with human CREBBP stretch occupies residues 1–24 (MEPVDPNLEPWNHPGSQPKTACNQ). A cysteine-rich region spans residues 22-37 (CNQCYCKKCSYHCLVC). Lysine 28 is modified (N6-acetyllysine; by host PCAF).

It belongs to the lentiviruses Tat family. As to quaternary structure, interacts with host CCNT1. Associates with the P-TEFb complex composed at least of Tat, P-TEFb (CDK9 and CCNT1), TAR RNA, RNA Pol II. Recruits the HATs CREBBP, TAF1/TFIID, EP300, PCAF and GCN5L2. Interacts with host KAT5/Tip60; this interaction targets the latter to degradation. Interacts with the host deacetylase SIRT1. Interacts with host capping enzyme RNGTT; this interaction stimulates RNGTT. Binds to host KDR, and to the host integrins ITGAV/ITGB3 and ITGA5/ITGB1. Interacts with host KPNB1/importin beta-1 without previous binding to KPNA1/importin alpha-1. Interacts with EIF2AK2. Interacts with host nucleosome assembly protein NAP1L1; this interaction may be required for the transport of Tat within the nucleus, since the two proteins interact at the nuclear rim. Interacts with host C1QBP/SF2P32; this interaction involves lysine-acetylated Tat. Interacts with the host chemokine receptors CCR2, CCR3 and CXCR4. Interacts with host DPP4/CD26; this interaction may trigger an anti-proliferative effect. Interacts with host LDLR. Interacts with the host extracellular matrix metalloproteinase MMP1. Interacts with host PRMT6; this interaction mediates Tat's methylation. Interacts with, and is ubiquitinated by MDM2/Hdm2. Interacts with host PSMC3 and HTATIP2. Interacts with STAB1; this interaction may overcome SATB1-mediated repression of IL2 and IL2RA (interleukin) in T cells by binding to the same domain than HDAC1. Interacts (when acetylated) with human CDK13, thereby increasing HIV-1 mRNA splicing and promoting the production of the doubly spliced HIV-1 protein Nef. Interacts with host TBP; this interaction modulates the activity of transcriptional pre-initiation complex. Interacts with host RELA. Interacts with host PLSCR1; this interaction negatively regulates Tat transactivation activity by altering its subcellular distribution. Phosphorylated by EIF2AK2 on serine and threonine residues adjacent to the basic region important for TAR RNA binding and function. Phosphorylation of Tat by EIF2AK2 is dependent on the prior activation of EIF2AK2 by dsRNA. In terms of processing, asymmetrical arginine methylation by host PRMT6 seems to diminish the transactivation capacity of Tat and affects the interaction with host CCNT1. Post-translationally, polyubiquitination by host MDM2 does not target Tat to degradation, but activates its transactivation function and fosters interaction with CCNT1 and TAR RNA.

The protein resides in the host nucleus. The protein localises to the host nucleolus. It localises to the host cytoplasm. Its subcellular location is the secreted. Its function is as follows. Transcriptional activator that increases RNA Pol II processivity, thereby increasing the level of full-length viral transcripts. Recognizes a hairpin structure at the 5'-LTR of the nascent viral mRNAs referred to as the transactivation responsive RNA element (TAR) and recruits the cyclin T1-CDK9 complex (P-TEFb complex) that will in turn hyperphosphorylate the RNA polymerase II to allow efficient elongation. The CDK9 component of P-TEFb and other Tat-activated kinases hyperphosphorylate the C-terminus of RNA Pol II that becomes stabilized and much more processive. Other factors such as HTATSF1/Tat-SF1, SUPT5H/SPT5, and HTATIP2 are also important for Tat's function. Besides its effect on RNA Pol II processivity, Tat induces chromatin remodeling of proviral genes by recruiting the histone acetyltransferases (HATs) CREBBP, EP300 and PCAF to the chromatin. This also contributes to the increase in proviral transcription rate, especially when the provirus integrates in transcriptionally silent region of the host genome. To ensure maximal activation of the LTR, Tat mediates nuclear translocation of NF-kappa-B by interacting with host RELA. Through its interaction with host TBP, Tat may also modulate transcription initiation. Tat can reactivate a latently infected cell by penetrating in it and transactivating its LTR promoter. In the cytoplasm, Tat is thought to act as a translational activator of HIV-1 mRNAs. In terms of biological role, extracellular circulating Tat can be endocytosed by surrounding uninfected cells via the binding to several surface receptors such as CD26, CXCR4, heparan sulfate proteoglycans (HSPG) or LDLR. Neurons are rarely infected, but they internalize Tat via their LDLR. Through its interaction with nuclear HATs, Tat is potentially able to control the acetylation-dependent cellular gene expression. Modulates the expression of many cellular genes involved in cell survival, proliferation or in coding for cytokines or cytokine receptors. Tat plays a role in T-cell and neurons apoptosis. Tat induced neurotoxicity and apoptosis probably contribute to neuroAIDS. Circulating Tat also acts as a chemokine-like and/or growth factor-like molecule that binds to specific receptors on the surface of the cells, affecting many cellular pathways. In the vascular system, Tat binds to ITGAV/ITGB3 and ITGA5/ITGB1 integrins dimers at the surface of endothelial cells and competes with bFGF for heparin-binding sites, leading to an excess of soluble bFGF. This Human immunodeficiency virus type 1 group M subtype C (isolate ETH2220) (HIV-1) protein is Protein Tat.